A 344-amino-acid polypeptide reads, in one-letter code: Phenylalanine--tRNA ligase alpha subunit (344 aa).

Glu255 provides a ligand contact to Mg(2+).

Belongs to the class-II aminoacyl-tRNA synthetase family. Phe-tRNA synthetase alpha subunit type 1 subfamily. In terms of assembly, tetramer of two alpha and two beta subunits. The cofactor is Mg(2+).

It is found in the cytoplasm. It carries out the reaction tRNA(Phe) + L-phenylalanine + ATP = L-phenylalanyl-tRNA(Phe) + AMP + diphosphate + H(+). This Phocaeicola vulgatus (strain ATCC 8482 / DSM 1447 / JCM 5826 / CCUG 4940 / NBRC 14291 / NCTC 11154) (Bacteroides vulgatus) protein is Phenylalanine--tRNA ligase alpha subunit.